The chain runs to 156 residues: Phosphopantetheine adenylyltransferase (156 aa).

The protein belongs to the eukaryotic CoaD family.

Its subcellular location is the cytoplasm. It carries out the reaction (R)-4'-phosphopantetheine + ATP + H(+) = 3'-dephospho-CoA + diphosphate. The protein operates within cofactor biosynthesis; coenzyme A biosynthesis. Reversibly transfers an adenylyl group from ATP to 4'-phosphopantetheine, yielding dephospho-CoA (dPCoA) and pyrophosphate. The sequence is that of Phosphopantetheine adenylyltransferase from Methanosarcina acetivorans (strain ATCC 35395 / DSM 2834 / JCM 12185 / C2A).